The chain runs to 616 residues: Mitochondrial Rho GTPase 2 (616 aa).

Over 1-590 (MKRDVRILLL…HDTELSTASF (590 aa)) the chain is Cytoplasmic. The Miro 1 domain maps to 2–168 (KRDVRILLLG…FYYAQKAVLH (167 aa)). GTP is bound by residues Gly-16, Lys-17, Thr-18, and Ser-19. Thr-18 contacts Mg(2+). A Mg(2+)-binding site is contributed by Asp-57. Ser-59, Asn-118, Lys-119, Asp-121, Ala-149, and Lys-150 together coordinate GTP. 2 consecutive EF-hand domains span residues 184-219 (QCKKALTRIFTISEQDNNQILSDEELNFFQQSCFGN) and 304-339 (FGYQFLQKAFEKHDLDEDGALSPSELQSFFSVFPYT). 7 residues coordinate Ca(2+): Asp-199, Asn-201, Glu-208, Asp-317, Asp-319, Asp-321, and Glu-328. The Miro 2 domain maps to 416-577 (RNVFLCRVIG…YSKLATAAAF (162 aa)). Residues Gly-428, Gly-430, Lys-431, Ser-432, and Ala-433 each coordinate GTP. Ser-432 contributes to the Mg(2+) binding site. Glu-474 contributes to the Mg(2+) binding site. Lys-528, Asp-530, and Cys-559 together coordinate GTP. A helical; Anchor for type IV membrane protein membrane pass occupies residues 591-613 (WLRVALGATVAAVVGFTLYKALL). The Mitochondrial intermembrane portion of the chain corresponds to 614-616 (RSK).

The protein belongs to the mitochondrial Rho GTPase family. Homodimer.

The protein localises to the mitochondrion outer membrane. The enzyme catalyses GTP + H2O = GDP + phosphate + H(+). It catalyses the reaction ATP + H2O = ADP + phosphate + H(+). It carries out the reaction UTP + H2O = UDP + phosphate + H(+). Functionally, atypical mitochondrial nucleoside-triphosphatase (NTPase) involved in mitochondrial trafficking. Probably involved in control of anterograde transport of mitochondria and their subcellular distribution. Can hydrolyze GTP, ATP and UTP. This is Mitochondrial Rho GTPase 2 (rhot2) from Xenopus tropicalis (Western clawed frog).